We begin with the raw amino-acid sequence, 361 residues long: Chorismate synthase (361 aa).

R48 and R54 together coordinate NADP(+). FMN is bound by residues R131 to S133, N243 to A244, G287, K302 to S306, and R328.

Belongs to the chorismate synthase family. Homotetramer. It depends on FMNH2 as a cofactor.

The enzyme catalyses 5-O-(1-carboxyvinyl)-3-phosphoshikimate = chorismate + phosphate. It participates in metabolic intermediate biosynthesis; chorismate biosynthesis; chorismate from D-erythrose 4-phosphate and phosphoenolpyruvate: step 7/7. Catalyzes the anti-1,4-elimination of the C-3 phosphate and the C-6 proR hydrogen from 5-enolpyruvylshikimate-3-phosphate (EPSP) to yield chorismate, which is the branch point compound that serves as the starting substrate for the three terminal pathways of aromatic amino acid biosynthesis. This reaction introduces a second double bond into the aromatic ring system. The sequence is that of Chorismate synthase from Rhodopseudomonas palustris (strain BisA53).